Consider the following 259-residue polypeptide: 5'-nucleotidase SurE (259 aa).

4 residues coordinate a divalent metal cation: D8, D9, S39, and N98.

Belongs to the SurE nucleotidase family. A divalent metal cation serves as cofactor.

It is found in the cytoplasm. The catalysed reaction is a ribonucleoside 5'-phosphate + H2O = a ribonucleoside + phosphate. Nucleotidase that shows phosphatase activity on nucleoside 5'-monophosphates. This Fervidobacterium nodosum (strain ATCC 35602 / DSM 5306 / Rt17-B1) protein is 5'-nucleotidase SurE.